Reading from the N-terminus, the 508-residue chain is Glycerol kinase (508 aa).

Threonine 14 is an ADP binding site. Positions 14, 15, and 16 each coordinate ATP. Threonine 14 contacts sn-glycerol 3-phosphate. Arginine 18 serves as a coordination point for ADP. Positions 84, 85, and 136 each coordinate sn-glycerol 3-phosphate. The glycerol site is built by arginine 84, glutamate 85, and tyrosine 136. The residue at position 232 (histidine 232) is a Phosphohistidine; by HPr. Residue aspartate 246 coordinates sn-glycerol 3-phosphate. Glycerol contacts are provided by aspartate 246 and glutamine 247. Positions 268 and 311 each coordinate ADP. The ATP site is built by threonine 268, glycine 311, glutamine 315, and glycine 412. Residues glycine 412 and asparagine 416 each contribute to the ADP site.

The protein belongs to the FGGY kinase family. As to quaternary structure, homotetramer and homodimer (in equilibrium). Post-translationally, the phosphoenolpyruvate-dependent sugar phosphotransferase system (PTS), including enzyme I, and histidine-containing protein (HPr) are required for the phosphorylation, which leads to the activation of the enzyme.

The catalysed reaction is glycerol + ATP = sn-glycerol 3-phosphate + ADP + H(+). It participates in polyol metabolism; glycerol degradation via glycerol kinase pathway; sn-glycerol 3-phosphate from glycerol: step 1/1. Its activity is regulated as follows. Activated by phosphorylation and inhibited by fructose 1,6-bisphosphate (FBP). Functionally, key enzyme in the regulation of glycerol uptake and metabolism. Catalyzes the phosphorylation of glycerol to yield sn-glycerol 3-phosphate. The protein is Glycerol kinase of Streptococcus pyogenes serotype M12 (strain MGAS2096).